The following is a 490-amino-acid chain: Histone-lysine N-methyltransferase Smyd1 (490 aa).

An SET domain is found at 7–253; it reads ENVEVFTSEG…EGEELTVSYI (247 aa). Position 17–19 (17–19) interacts with S-adenosyl-L-methionine; that stretch reads KGR. Zn(2+)-binding residues include cysteine 52, cysteine 55, cysteine 65, cysteine 68, cysteine 74, cysteine 78, histidine 86, and cysteine 90. An MYND-type zinc finger spans residues 52–90; the sequence is CHTCFKRQEKLHRCGQCKFAHYCDRTCQKDAWLNHKNEC. S-adenosyl-L-methionine-binding positions include histidine 135 and 205–206; that span reads NH. Cysteine 208 contacts Zn(2+). 270-272 serves as a coordination point for S-adenosyl-L-methionine; it reads YYF. Positions 274, 276, and 279 each coordinate Zn(2+).

This sequence belongs to the class V-like SAM-binding methyltransferase superfamily. In terms of assembly, interacts with HDAC1, HDAC2 and HDAC3. Interacts (via MYND-type zinc finger) with NACA isoform skNAC. In terms of tissue distribution, expressed in cardiac and skeletal muscle, lymphocytes and thymus.

It localises to the cytoplasm. It is found in the nucleus. The enzyme catalyses L-lysyl(4)-[histone H3] + 3 S-adenosyl-L-methionine = N(6),N(6),N(6)-trimethyl-L-lysyl(4)-[histone H3] + 3 S-adenosyl-L-homocysteine + 3 H(+). Methylates histone H3 at 'Lys-4' (H3K4me). Acts as a transcriptional repressor. Essential for cardiomyocyte differentiation and cardiac morphogenesis. The chain is Histone-lysine N-methyltransferase Smyd1 (Smyd1) from Mus musculus (Mouse).